We begin with the raw amino-acid sequence, 307 residues long: UPF0749 protein MT1871 (307 aa).

The signal sequence occupies residues 1-23 (MAESDRLLGGYDPNAGYSAHAGA). A run of 2 helical transmembrane segments spans residues 67–87 (VSWM…AAAV) and 152–172 (VLSL…VTVT).

This sequence belongs to the UPF0749 family.

It is found in the cell membrane. This is UPF0749 protein MT1871 from Mycobacterium tuberculosis (strain CDC 1551 / Oshkosh).